Here is a 444-residue protein sequence, read N- to C-terminus: Serine--tRNA ligase (444 aa).

An L-serine-binding site is contributed by 249-251; it reads TAE. ATP is bound by residues 280–282 and Val296; that span reads RRE. Glu303 contacts L-serine. 367–370 is a binding site for ATP; the sequence is EIVS. Thr401 is a binding site for L-serine.

This sequence belongs to the class-II aminoacyl-tRNA synthetase family. Type-1 seryl-tRNA synthetase subfamily. In terms of assembly, homodimer. The tRNA molecule binds across the dimer.

The protein localises to the cytoplasm. It carries out the reaction tRNA(Ser) + L-serine + ATP = L-seryl-tRNA(Ser) + AMP + diphosphate + H(+). The enzyme catalyses tRNA(Sec) + L-serine + ATP = L-seryl-tRNA(Sec) + AMP + diphosphate + H(+). Its pathway is aminoacyl-tRNA biosynthesis; selenocysteinyl-tRNA(Sec) biosynthesis; L-seryl-tRNA(Sec) from L-serine and tRNA(Sec): step 1/1. Catalyzes the attachment of serine to tRNA(Ser). Is also able to aminoacylate tRNA(Sec) with serine, to form the misacylated tRNA L-seryl-tRNA(Sec), which will be further converted into selenocysteinyl-tRNA(Sec). This Picrophilus torridus (strain ATCC 700027 / DSM 9790 / JCM 10055 / NBRC 100828 / KAW 2/3) protein is Serine--tRNA ligase.